The sequence spans 192 residues: uncharacterized protein (192 aa).

Residues 71 to 100 are disordered; that stretch reads NNVLPEPSKPNNPVVNPPVSPIQPKTDPEQ. The span at 77–91 shows a compositional bias: pro residues; the sequence is PSKPNNPVVNPPVSP.

This is an uncharacterized protein from Caenorhabditis elegans.